The sequence spans 387 residues: Phosphoglycerate kinase (387 aa).

Substrate-binding positions include 21 to 23 (DLN), R36, 59 to 62 (HLGR), R113, and R146. ATP is bound by residues K197, E314, and 340–343 (GGDT).

Belongs to the phosphoglycerate kinase family. Monomer.

The protein localises to the cytoplasm. It carries out the reaction (2R)-3-phosphoglycerate + ATP = (2R)-3-phospho-glyceroyl phosphate + ADP. It participates in carbohydrate degradation; glycolysis; pyruvate from D-glyceraldehyde 3-phosphate: step 2/5. The protein is Phosphoglycerate kinase of Salmonella schwarzengrund (strain CVM19633).